A 153-amino-acid polypeptide reads, in one-letter code: MKTKQLVASEEVYDFLKVIWPDYETESRYDNLSLIVCTLSDPDCVRWLSENMKFGDEKQLALMKEKYGWEVGDKLPEWLHSSYHRLLLIGELLESNLKLKKYTVEITETLSRLVSIEAENPDEAERLVREKYKSCEIVLDADDFQDYDTSIYE.

The chain is Protein DpnD from Streptococcus pneumoniae serotype 4 (strain ATCC BAA-334 / TIGR4).